We begin with the raw amino-acid sequence, 164 residues long: MAKDASFDIVSQVDEQEVTNAVHQAVKEMEQRFDFKGSKSEIRQEQGAIILVSDDEFKLKNVTDILEAKMVKRGISLRALRYGKIESAAGDMVRQKVDLVQGISKENAKKITKLIKDSKIKVQTSVQGDQIRVSGNKRDDLQAVIALLRKADLDIELQFINFRS.

The protein belongs to the YajQ family.

Functionally, nucleotide-binding protein. This Heliobacterium modesticaldum (strain ATCC 51547 / Ice1) protein is Nucleotide-binding protein Helmi_22490.